A 204-amino-acid chain; its full sequence is Inositol diphosphatase DSP2 (204 aa).

The tract at residues 1–27 is disordered; it reads MQLEISPRQRSQQQKEEEGEHQQRAGE. Residues 13 to 27 are compositionally biased toward basic and acidic residues; it reads QQKEEEGEHQQRAGE. Positions 51 to 203 constitute a Tyrosine-protein phosphatase domain; it reads NFAEVNDGIF…SSLMHLTASQ (153 aa). The segment at 107–119 is WPD loop important for active site topology; it reads FGIDGSKELLVNI. Residues Asn-118, Ile-119, and Lys-123 each coordinate 1D-myo-inositol hexakisphosphate. The active-site Phosphocysteine intermediate is Cys-143.

It belongs to the protein-tyrosine phosphatase family. Atypical dual-specificity phosphatase Siw14-like subfamily. As to expression, expressed in roots and young panicles.

It is found in the cytoplasm. Its subcellular location is the nucleus. It catalyses the reaction 5-diphospho-1D-myo-inositol 1,2,3,4,6-pentakisphosphate + H2O = 1D-myo-inositol hexakisphosphate + phosphate + H(+). The enzyme catalyses 1,5-bis(diphospho)-1D-myo-inositol 2,3,4,6-tetrakisphosphate + H2O = 1-diphospho-1D-myo-inositol 2,3,4,5,6-pentakisphosphate + phosphate + 2 H(+). The catalysed reaction is 3,5-bis(diphospho)-1D-myo-inositol 1,2,4,6-tetrakisphosphate + H2O = 3-diphospho-1D-myo-inositol 1,2,4,5,6-pentakisphosphate + phosphate + 2 H(+). It carries out the reaction 6-diphospho-1D-myo-inositol pentakisphosphate + H2O = 1D-myo-inositol hexakisphosphate + phosphate + H(+). Its function is as follows. Cleaves the beta-phosphate at the 5-position of soluble inositol pyrophosphates. Has highest activity on 5-diphosphoinositol 1,2,3,4,6-pentakisphosphate (5-InsP(7)). Acts as a negative regulator of defense responses against the fungal pathogen Magnaporthe oryzae. This chain is Inositol diphosphatase DSP2, found in Oryza sativa subsp. japonica (Rice).